A 132-amino-acid chain; its full sequence is Small ribosomal subunit protein uS8 (132 aa).

Belongs to the universal ribosomal protein uS8 family. Part of the 30S ribosomal subunit. Contacts proteins S5 and S12.

Functionally, one of the primary rRNA binding proteins, it binds directly to 16S rRNA central domain where it helps coordinate assembly of the platform of the 30S subunit. The polypeptide is Small ribosomal subunit protein uS8 (Staphylococcus epidermidis (strain ATCC 35984 / DSM 28319 / BCRC 17069 / CCUG 31568 / BM 3577 / RP62A)).